A 631-amino-acid chain; its full sequence is tRNA uridine 5-carboxymethylaminomethyl modification enzyme MnmG (631 aa).

Residues 13–18, Val125, and Ser180 contribute to the FAD site; that span reads GGGHAG. An NAD(+)-binding site is contributed by 273–287; that stretch reads GPRYCPSIEDKVMRF. An FAD-binding site is contributed by Gln370.

The protein belongs to the MnmG family. In terms of assembly, homodimer. Heterotetramer of two MnmE and two MnmG subunits. It depends on FAD as a cofactor.

The protein localises to the cytoplasm. Its function is as follows. NAD-binding protein involved in the addition of a carboxymethylaminomethyl (cmnm) group at the wobble position (U34) of certain tRNAs, forming tRNA-cmnm(5)s(2)U34. The sequence is that of tRNA uridine 5-carboxymethylaminomethyl modification enzyme MnmG from Vibrio parahaemolyticus serotype O3:K6 (strain RIMD 2210633).